Consider the following 160-residue polypeptide: Transcriptional repressor NrdR (160 aa).

The span at 1 to 11 (MRCPNCNSLDT) shows a compositional bias: polar residues. Residues 1 to 20 (MRCPNCNSLDTQVKDSRPTE) form a disordered region. Residues 3–34 (CPNCNSLDTQVKDSRPTEDSSVIRRRRVCIAC) fold into a zinc finger. The ATP-cone domain occupies 49 to 139 (LIVIKRNGRR…VYRNFREAKD (91 aa)).

It belongs to the NrdR family. It depends on Zn(2+) as a cofactor.

Functionally, negatively regulates transcription of bacterial ribonucleotide reductase nrd genes and operons by binding to NrdR-boxes. The polypeptide is Transcriptional repressor NrdR (Rhodopseudomonas palustris (strain ATCC BAA-98 / CGA009)).